Consider the following 446-residue polypeptide: MEMEQEKMTMNKELSPDAAAYCCSACHGDETWSYNHPIRGRAKSRSLSASPALGSTKEFRRTRSLHGPCPVTTFGPKACVLQNPQTIMHIQDPASQRLTWNKSPKSVLVIKKMRDASLLQPFKELCTHLMEENMIVYVEKKVLEDPAIASDESFGAVKKKFCTFREDYDDISNQIDFIICLGGDGTLLYASSLFQGSVPPVMAFHLGSLGFLTPFSFENFQSQVTQVIEGNAAVVLRSRLKVRVVKELRGKKTAVHNGLGENGSQAAGLDMDVGKQAMQYQVLNEVVIDRGPSSYLSNVDVYLDGHLITTVQGDGVIVSTPTGSTAYAAAAGASMIHPNVPAIMITPICPHSLSFRPIVVPAGVELKIMLSPEARNTAWVSFDGRKRQEIRHGDSISITTSCYPLPSICVRDPVSDWFESLAQCLHWNVRKKQAHFEEEEEEEEEG.

Residues serine 46, serine 48, serine 50, serine 55, and serine 64 each carry the phosphoserine modification.

Belongs to the NAD kinase family. A divalent metal cation is required as a cofactor. As to expression, widely expressed but not detected in skeletal muscle.

It carries out the reaction NAD(+) + ATP = ADP + NADP(+) + H(+). The chain is NAD kinase (NADK) from Homo sapiens (Human).